Consider the following 1244-residue polypeptide: Superkiller complex protein 2 (1244 aa).

A disordered region spans residues 218 to 249 (LDLSGGDEDEGEAAGGPRGDNASPSPSGTPLV). Residues Ser-242 and Ser-253 each carry the phosphoserine modification. In terms of domain architecture, Helicase ATP-binding spans 316–472 (ILHLEQHDSV…WIGRLKRRQI (157 aa)). 329-336 (AHTSAGKT) lines the ATP pocket. Residues 420–423 (DEVH) carry the DEVH box motif. Residues 582-752 (GLTSLDLTTS…LTYTMILNLL (171 aa)) form the Helicase C-terminal domain.

This sequence belongs to the helicase family. SKI2 subfamily. Component of the SKI complex which consists of SKIC2, SKIC3 and SKIC8. Interacts with HBS1L isoform 2.

The protein localises to the nucleus. It is found in the cytoplasm. The catalysed reaction is ATP + H2O = ADP + phosphate + H(+). Its function is as follows. Helicase component of the SKI complex, a multiprotein complex that assists the RNA-degrading exosome during the mRNA decay and quality-control pathways. The SKI complex catalyzes mRNA extraction from 80S ribosomal complexes in the 3'-5' direction and channels mRNA to the cytosolic exosome for degradation. SKI-mediated extraction of mRNA from stalled ribosomes allow binding of the Pelota-HBS1L complex and subsequent ribosome disassembly by ABCE1 for ribosome recycling. In the nucleus, the SKI complex associates with transcriptionally active genes in a manner dependent on PAF1 complex (PAF1C). This chain is Superkiller complex protein 2, found in Mus musculus (Mouse).